Consider the following 480-residue polypeptide: Aspartyl/glutamyl-tRNA(Asn/Gln) amidotransferase subunit B (480 aa).

It belongs to the GatB/GatE family. GatB subfamily. In terms of assembly, heterotrimer of A, B and C subunits.

It catalyses the reaction L-glutamyl-tRNA(Gln) + L-glutamine + ATP + H2O = L-glutaminyl-tRNA(Gln) + L-glutamate + ADP + phosphate + H(+). The enzyme catalyses L-aspartyl-tRNA(Asn) + L-glutamine + ATP + H2O = L-asparaginyl-tRNA(Asn) + L-glutamate + ADP + phosphate + 2 H(+). Functionally, allows the formation of correctly charged Asn-tRNA(Asn) or Gln-tRNA(Gln) through the transamidation of misacylated Asp-tRNA(Asn) or Glu-tRNA(Gln) in organisms which lack either or both of asparaginyl-tRNA or glutaminyl-tRNA synthetases. The reaction takes place in the presence of glutamine and ATP through an activated phospho-Asp-tRNA(Asn) or phospho-Glu-tRNA(Gln). In Hahella chejuensis (strain KCTC 2396), this protein is Aspartyl/glutamyl-tRNA(Asn/Gln) amidotransferase subunit B.